Reading from the N-terminus, the 209-residue chain is Ion-translocating oxidoreductase complex subunit G (209 aa).

The helical transmembrane segment at 9–29 (GITLALFAAGATGLTAVVNSL) threads the bilayer. Thr175 is subject to FMN phosphoryl threonine.

It belongs to the RnfG family. In terms of assembly, the complex is composed of six subunits: RnfA, RnfB, RnfC, RnfD, RnfE and RnfG. It depends on FMN as a cofactor.

It is found in the cell inner membrane. Functionally, part of a membrane-bound complex that couples electron transfer with translocation of ions across the membrane. This is Ion-translocating oxidoreductase complex subunit G from Yersinia pestis.